A 92-amino-acid polypeptide reads, in one-letter code: Neurophysin 2 (92 aa).

Cystine bridges form between Cys-10/Cys-54, Cys-13/Cys-27, Cys-21/Cys-44, Cys-28/Cys-34, Cys-61/Cys-73, Cys-67/Cys-85, and Cys-74/Cys-79.

It belongs to the vasopressin/oxytocin family. There is an equilibrium between the monomeric and dimeric forms. On peptide binding the dimeric form predominates. Post-translationally, a shorter neurophysin molecule (1-90) also exists and is probably derived from the complete protein by proteolytic degradation (in vivo or after extraction).

The protein resides in the secreted. Neurophysin 2 specifically binds vasopressin. This is Neurophysin 2 (AVP) from Loxodonta africana (African elephant).